We begin with the raw amino-acid sequence, 163 residues long: Phosphopantetheine adenylyltransferase (163 aa).

Ser10 contacts substrate. Residues 10–11 and His18 contribute to the ATP site; that span reads SF. Positions 42, 74, and 88 each coordinate substrate. Residues 89–91, Glu99, and 124–130 contribute to the ATP site; these read GLR and YSFLSSS.

Belongs to the bacterial CoaD family. Homohexamer. The cofactor is Mg(2+).

It is found in the cytoplasm. It catalyses the reaction (R)-4'-phosphopantetheine + ATP + H(+) = 3'-dephospho-CoA + diphosphate. Its pathway is cofactor biosynthesis; coenzyme A biosynthesis; CoA from (R)-pantothenate: step 4/5. Reversibly transfers an adenylyl group from ATP to 4'-phosphopantetheine, yielding dephospho-CoA (dPCoA) and pyrophosphate. This Bacillus cereus (strain G9842) protein is Phosphopantetheine adenylyltransferase.